The primary structure comprises 250 residues: UPF0259 membrane protein SG1383 (250 aa).

Transmembrane regions (helical) follow at residues 20–40, 86–106, 121–141, 146–166, 191–211, and 219–239; these read FASI…LGHA, AGTL…LTMI, IGLS…TTLL, LLLI…APVI, LLAP…LLAT, and LVAV…LLIY.

It belongs to the UPF0259 family.

It is found in the cell inner membrane. This is UPF0259 membrane protein SG1383 from Sodalis glossinidius (strain morsitans).